The chain runs to 293 residues: ATP phosphoribosyltransferase (293 aa).

Belongs to the ATP phosphoribosyltransferase family. Long subfamily. Requires Mg(2+) as cofactor.

It localises to the cytoplasm. The catalysed reaction is 1-(5-phospho-beta-D-ribosyl)-ATP + diphosphate = 5-phospho-alpha-D-ribose 1-diphosphate + ATP. It participates in amino-acid biosynthesis; L-histidine biosynthesis; L-histidine from 5-phospho-alpha-D-ribose 1-diphosphate: step 1/9. Feedback inhibited by histidine. Catalyzes the condensation of ATP and 5-phosphoribose 1-diphosphate to form N'-(5'-phosphoribosyl)-ATP (PR-ATP). Has a crucial role in the pathway because the rate of histidine biosynthesis seems to be controlled primarily by regulation of HisG enzymatic activity. This is ATP phosphoribosyltransferase from Nitratidesulfovibrio vulgaris (strain DP4) (Desulfovibrio vulgaris).